The following is a 423-amino-acid chain: Gamma-glutamyl phosphate reductase (423 aa).

This sequence belongs to the gamma-glutamyl phosphate reductase family.

It is found in the cytoplasm. It carries out the reaction L-glutamate 5-semialdehyde + phosphate + NADP(+) = L-glutamyl 5-phosphate + NADPH + H(+). It functions in the pathway amino-acid biosynthesis; L-proline biosynthesis; L-glutamate 5-semialdehyde from L-glutamate: step 2/2. Functionally, catalyzes the NADPH-dependent reduction of L-glutamate 5-phosphate into L-glutamate 5-semialdehyde and phosphate. The product spontaneously undergoes cyclization to form 1-pyrroline-5-carboxylate. This chain is Gamma-glutamyl phosphate reductase, found in Pseudomonas fluorescens (strain Pf0-1).